Consider the following 946-residue polypeptide: Bifunctional glutamine synthetase adenylyltransferase/adenylyl-removing enzyme (946 aa).

The tract at residues 1 to 440 (MKPLSSPLQQ…VFNELIGDDE (440 aa)) is adenylyl removase. The interval 449-946 (SEQWRELWQD…ASWQKWLVEE (498 aa)) is adenylyl transferase.

Belongs to the GlnE family. Mg(2+) is required as a cofactor.

The catalysed reaction is [glutamine synthetase]-O(4)-(5'-adenylyl)-L-tyrosine + phosphate = [glutamine synthetase]-L-tyrosine + ADP. It catalyses the reaction [glutamine synthetase]-L-tyrosine + ATP = [glutamine synthetase]-O(4)-(5'-adenylyl)-L-tyrosine + diphosphate. Involved in the regulation of glutamine synthetase GlnA, a key enzyme in the process to assimilate ammonia. When cellular nitrogen levels are high, the C-terminal adenylyl transferase (AT) inactivates GlnA by covalent transfer of an adenylyl group from ATP to specific tyrosine residue of GlnA, thus reducing its activity. Conversely, when nitrogen levels are low, the N-terminal adenylyl removase (AR) activates GlnA by removing the adenylyl group by phosphorolysis, increasing its activity. The regulatory region of GlnE binds the signal transduction protein PII (GlnB) which indicates the nitrogen status of the cell. The sequence is that of Bifunctional glutamine synthetase adenylyltransferase/adenylyl-removing enzyme from Shigella dysenteriae serotype 1 (strain Sd197).